The following is a 295-amino-acid chain: MYYEKAVQKTINWIESHLHEQISNEDIVNVSSFSKFHFHRIFQKEVGMSVASYIRLRRLANAAAALLYTDHRIIDIALYYQFESQEAFTRTFKKMYHMPPGAYRTFMKRFTSKKEESYMEKKMKGWVLSGSHPFQFEMGIDRENVHQGKASGYLKSTMVQDIGEFATMMQQFKADRYLGKRLRLSSFIKTKGVQHFASLWMRVDSAADDVLQFDNMSNRPITGTTNWNHYAIVLDVPENSAVISFGVQLSGPGQVWMDHVVFEEVDESVPSTNLEMPGELLDEPVNLSFEEELQK.

Residues 8–106 (QKTINWIESH…HMPPGAYRTF (99 aa)) form the HTH araC/xylS-type domain. A DNA-binding region (H-T-H motif) is located at residues 25–46 (EDIVNVSSFSKFHFHRIFQKEV).

Its function is as follows. Probable transcriptional regulator. This is an uncharacterized protein from Bacillus subtilis (strain 168).